We begin with the raw amino-acid sequence, 191 residues long: Protein GrpE (191 aa).

Residues 1–14 are compositionally biased toward polar residues; sequence MEDQKQTPSNQTAT. Residues 1–35 form a disordered region; sequence MEDQKQTPSNQTATPAGDEATSTAAASPETGAPDT. Over residues 19 to 35 the composition is skewed to low complexity; the sequence is EATSTAAASPETGAPDT.

It belongs to the GrpE family. As to quaternary structure, homodimer.

The protein resides in the cytoplasm. Participates actively in the response to hyperosmotic and heat shock by preventing the aggregation of stress-denatured proteins, in association with DnaK and GrpE. It is the nucleotide exchange factor for DnaK and may function as a thermosensor. Unfolded proteins bind initially to DnaJ; upon interaction with the DnaJ-bound protein, DnaK hydrolyzes its bound ATP, resulting in the formation of a stable complex. GrpE releases ADP from DnaK; ATP binding to DnaK triggers the release of the substrate protein, thus completing the reaction cycle. Several rounds of ATP-dependent interactions between DnaJ, DnaK and GrpE are required for fully efficient folding. The chain is Protein GrpE from Cupriavidus taiwanensis (strain DSM 17343 / BCRC 17206 / CCUG 44338 / CIP 107171 / LMG 19424 / R1) (Ralstonia taiwanensis (strain LMG 19424)).